We begin with the raw amino-acid sequence, 636 residues long: Ligand-gated ion channel 4 (636 aa).

The signal sequence occupies residues 1-25 (MVICHSCTTFCILLVIDLVPCRIVG). The Extracellular segment spans residues 26 to 326 (MENVENRVMF…IHMHRRPLFY (301 aa)). Residues asparagine 45, asparagine 141, asparagine 179, and asparagine 227 are each glycosylated (N-linked (GlcNAc...) asparagine). An intrachain disulfide couples cysteine 240 to cysteine 254. Asparagine 284 carries N-linked (GlcNAc...) asparagine glycosylation. 3 helical membrane-spanning segments follow: residues 327–347 (VFNH…GFLM), 357–377 (MIIT…ESIP), and 383–403 (VPLI…ATCV). Residues 404–602 (NVITLNMHRN…QLASVVDRLL (199 aa)) lie on the Cytoplasmic side of the membrane. The helical transmembrane segment at 603–623 (LCLFCTATLFTIICLLIVPVV) threads the bilayer.

It belongs to the ligand-gated ion channel (TC 1.A.9) family.

The protein localises to the postsynaptic cell membrane. It localises to the cell membrane. Its function is as follows. Acetylcholine receptor. This chain is Ligand-gated ion channel 4, found in Caenorhabditis briggsae.